The following is a 379-amino-acid chain: Carbamoyl phosphate synthase small chain (379 aa).

The segment at 1 to 187 (MNFTPALLAL…GSGHAPAPAS (187 aa)) is CPSase. Residues Ser-48, Gly-239, and Gly-241 each coordinate L-glutamine. In terms of domain architecture, Glutamine amidotransferase type-1 spans 191–378 (KVVAYDFGVK…IELMKPQGVR (188 aa)). Catalysis depends on Cys-267, which acts as the Nucleophile. L-glutamine contacts are provided by Leu-268, Gln-271, Asn-309, Gly-311, and Phe-312. Catalysis depends on residues His-351 and Glu-353.

Belongs to the CarA family. In terms of assembly, composed of two chains; the small (or glutamine) chain promotes the hydrolysis of glutamine to ammonia, which is used by the large (or ammonia) chain to synthesize carbamoyl phosphate. Tetramer of heterodimers (alpha,beta)4.

The enzyme catalyses hydrogencarbonate + L-glutamine + 2 ATP + H2O = carbamoyl phosphate + L-glutamate + 2 ADP + phosphate + 2 H(+). The catalysed reaction is L-glutamine + H2O = L-glutamate + NH4(+). It functions in the pathway amino-acid biosynthesis; L-arginine biosynthesis; carbamoyl phosphate from bicarbonate: step 1/1. The protein operates within pyrimidine metabolism; UMP biosynthesis via de novo pathway; (S)-dihydroorotate from bicarbonate: step 1/3. Small subunit of the glutamine-dependent carbamoyl phosphate synthetase (CPSase). CPSase catalyzes the formation of carbamoyl phosphate from the ammonia moiety of glutamine, carbonate, and phosphate donated by ATP, constituting the first step of 2 biosynthetic pathways, one leading to arginine and/or urea and the other to pyrimidine nucleotides. The small subunit (glutamine amidotransferase) binds and cleaves glutamine to supply the large subunit with the substrate ammonia. In Thioalkalivibrio sulfidiphilus (strain HL-EbGR7), this protein is Carbamoyl phosphate synthase small chain.